Reading from the N-terminus, the 434-residue chain is Alpha-enolase (434 aa).

Ser40 provides a ligand contact to Mg(2+). His158 and Glu167 together coordinate substrate. Residue Glu210 is the Proton donor of the active site. Mg(2+) contacts are provided by Asp245, Glu293, and Asp318. Substrate is bound by residues Glu293 and Asp318. Lys343 (proton acceptor) is an active-site residue. Substrate-binding positions include 370 to 373 and Lys394; that span reads SHRS.

Belongs to the enolase family. As to quaternary structure, homodimer. Mg(2+) serves as cofactor.

The protein localises to the cytoplasm. It catalyses the reaction (2R)-2-phosphoglycerate = phosphoenolpyruvate + H2O. Its pathway is carbohydrate degradation; glycolysis; pyruvate from D-glyceraldehyde 3-phosphate: step 4/5. In Sceloporus undulatus (Eastern fence lizard), this protein is Alpha-enolase.